The sequence spans 117 residues: Large ribosomal subunit protein bL20 (117 aa).

Belongs to the bacterial ribosomal protein bL20 family.

Its function is as follows. Binds directly to 23S ribosomal RNA and is necessary for the in vitro assembly process of the 50S ribosomal subunit. It is not involved in the protein synthesizing functions of that subunit. The sequence is that of Large ribosomal subunit protein bL20 from Carboxydothermus hydrogenoformans (strain ATCC BAA-161 / DSM 6008 / Z-2901).